The sequence spans 94 residues: Integration host factor subunit beta (94 aa).

The protein belongs to the bacterial histone-like protein family. As to quaternary structure, heterodimer of an alpha and a beta chain.

This protein is one of the two subunits of integration host factor, a specific DNA-binding protein that functions in genetic recombination as well as in transcriptional and translational control. The polypeptide is Integration host factor subunit beta (Photorhabdus laumondii subsp. laumondii (strain DSM 15139 / CIP 105565 / TT01) (Photorhabdus luminescens subsp. laumondii)).